The primary structure comprises 423 residues: Serine--tRNA ligase (423 aa).

231 to 233 is an L-serine binding site; the sequence is TAE. Residue 262 to 264 coordinates ATP; sequence RSE. Residue E285 participates in L-serine binding. 349-352 contacts ATP; it reads EISS. S384 lines the L-serine pocket.

Belongs to the class-II aminoacyl-tRNA synthetase family. Type-1 seryl-tRNA synthetase subfamily. In terms of assembly, homodimer. The tRNA molecule binds across the dimer.

The protein resides in the cytoplasm. The enzyme catalyses tRNA(Ser) + L-serine + ATP = L-seryl-tRNA(Ser) + AMP + diphosphate + H(+). It carries out the reaction tRNA(Sec) + L-serine + ATP = L-seryl-tRNA(Sec) + AMP + diphosphate + H(+). It participates in aminoacyl-tRNA biosynthesis; selenocysteinyl-tRNA(Sec) biosynthesis; L-seryl-tRNA(Sec) from L-serine and tRNA(Sec): step 1/1. Functionally, catalyzes the attachment of serine to tRNA(Ser). Is also able to aminoacylate tRNA(Sec) with serine, to form the misacylated tRNA L-seryl-tRNA(Sec), which will be further converted into selenocysteinyl-tRNA(Sec). This chain is Serine--tRNA ligase, found in Acinetobacter baumannii (strain AB307-0294).